A 228-amino-acid polypeptide reads, in one-letter code: General odorant-binding protein 71 (228 aa).

The signal sequence occupies residues 1–20 (MCGAIVLLLLVGTSPAPVEG). The disordered stretch occupies residues 50–131 (TMGEWGQRDR…GNSSSSSSST (82 aa)). Residues 55-72 (GQRDRNGEEQQMMRDYGR) are compositionally biased toward basic and acidic residues. The segment covering 83 to 99 (GGQTSGSSSSGSAGEHS) has biased composition (low complexity). The span at 111-120 (AGQGGNGTRS) shows a compositional bias: gly residues. A compositionally biased stretch (low complexity) spans 121–131 (GGNSSSSSSST). 2 cysteine pairs are disulfide-bonded: cysteine 138–cysteine 199 and cysteine 185–cysteine 208.

Belongs to the PBP/GOBP family.

The protein localises to the secreted. In terms of biological role, present in the aqueous fluid surrounding olfactory sensory dendrites and are thought to aid in the capture and transport of hydrophobic odorants into and through this fluid. This chain is General odorant-binding protein 71 (Obp71), found in Anopheles gambiae (African malaria mosquito).